Consider the following 450-residue polypeptide: Putative gustatory receptor 28a (450 aa).

The Cytoplasmic segment spans residues 1 to 47 (MAFKLWERFSQADNVFQALRPLTFISLLGLAPFRLNLNPRKEVQTSK). The chain crosses the membrane as a helical span at residues 48-68 (FSFFAGIVHFLFFVLCFGISV). The Extracellular segment spans residues 69–87 (KEGDSIIGYFFQTNITRFS). Asn82 is a glycosylation site (N-linked (GlcNAc...) asparagine). A helical membrane pass occupies residues 88–108 (DGTLRLTGILAMSTIFGFAMF). The Cytoplasmic segment spans residues 109-138 (KRQRLVSIIQNNIVVDEIFVRLGMKLDYRR). A helical membrane pass occupies residues 139 to 159 (ILLSSFLISLGMLLFNVIYLC). Residues 160–171 (VSYSLLVSATIS) are Extracellular-facing. A helical membrane pass occupies residues 172-192 (PSFVTFTTFALPHINISLMVF). Over 193–292 (KFLCTTDLAR…CQTIEEYFTY (100 aa)) the chain is Cytoplasmic. Residues 293-313 (PLLGIIAISFLFILFDDFYIL) traverse the membrane as a helical segment. Topologically, residues 314 to 329 (EAILNPKRLDVFEADE) are extracellular. Residues 330 to 350 (FFAFFLMQLIWYIVIIVLIVE) form a helical membrane-spanning segment. Residues 351–407 (GSSRTILHSSYTAAIVHKILNITDDPELRDRLFRLSLQLSHRKVLFTAAGLFRLDRT) are Cytoplasmic-facing. A helical membrane pass occupies residues 408 to 424 (LIFTITGAATCYLIILI). Over 425 to 450 (QFRFTHHMDDTSSNSTNNLHSIHLGD) the chain is Extracellular. Asn438 carries N-linked (GlcNAc...) asparagine glycosylation.

This sequence belongs to the insect chemoreceptor superfamily. Gustatory receptor (GR) family. Gr2a subfamily. As to expression, in addition to expression in a large number of taste neurons, Gr28a is also expressed in a few nonchemosensory neurons, including the campaniform sensilla of the wing, leg stretch receptors, and multiple dendritic (MD) neurons in the abdomen. In larvea, is expressed in neurons of the terminal external chemosensory organ, the dorsal external chemosensory organ, as well as in the ventral and posterior pharyngeal sense organ.

The protein resides in the cell membrane. Probable gustatory receptor which mediates acceptance or avoidance behavior, depending on its substrates. Atypical expression also suggests nongustatory roles in the nervous system and tissues involved in proprioception, hygroreception, and other sensory modalities. It is also possible that it has chemosensory roles in the detection of internal ligands. This is Putative gustatory receptor 28a (Gr28a) from Drosophila melanogaster (Fruit fly).